Consider the following 631-residue polypeptide: Translation factor GUF1, mitochondrial (631 aa).

The transit peptide at 1–19 (MFNRRLLRHVRYAFQQVRS) directs the protein to the mitochondrion. Positions 33–214 (ERYRNFSIVA…AIVDRIPPPT (182 aa)) constitute a tr-type G domain. Residues 42 to 49 (AHVDHGKS), 107 to 111 (DTPGH), and 161 to 164 (NKID) contribute to the GTP site.

The protein belongs to the TRAFAC class translation factor GTPase superfamily. Classic translation factor GTPase family. LepA subfamily.

It is found in the mitochondrion inner membrane. The catalysed reaction is GTP + H2O = GDP + phosphate + H(+). Promotes mitochondrial protein synthesis. May act as a fidelity factor of the translation reaction, by catalyzing a one-codon backward translocation of tRNAs on improperly translocated ribosomes. Binds to mitochondrial ribosomes in a GTP-dependent manner. The polypeptide is Translation factor GUF1, mitochondrial (Kluyveromyces lactis (strain ATCC 8585 / CBS 2359 / DSM 70799 / NBRC 1267 / NRRL Y-1140 / WM37) (Yeast)).